A 105-amino-acid chain; its full sequence is MDKFYNYNSSSHQALLSFKVKPNSKQNLISNFVIINNIPYLKLSIKAIPEQGKANEEIINYLAKEWKLSRSNIEIIKGHTHSLKTILIKNINEDYLNLIINSYIK.

This sequence belongs to the UPF0235 family.

In Rickettsia africae (strain ESF-5), this protein is UPF0235 protein RAF_ORF1191.